Reading from the N-terminus, the 176-residue chain is Ribosome maturation factor RimM (176 aa).

The PRC barrel domain maps to 101–173 (EGEYYHYRLI…RMVVDLPEGL (73 aa)).

It belongs to the RimM family. In terms of assembly, binds ribosomal protein uS19.

The protein localises to the cytoplasm. Functionally, an accessory protein needed during the final step in the assembly of 30S ribosomal subunit, possibly for assembly of the head region. Essential for efficient processing of 16S rRNA. May be needed both before and after RbfA during the maturation of 16S rRNA. It has affinity for free ribosomal 30S subunits but not for 70S ribosomes. In Syntrophobacter fumaroxidans (strain DSM 10017 / MPOB), this protein is Ribosome maturation factor RimM.